Consider the following 461-residue polypeptide: UPF0210 protein Ddes_0622 (461 aa).

The protein belongs to the UPF0210 family. In terms of assembly, homodimer.

This is UPF0210 protein Ddes_0622 from Desulfovibrio desulfuricans (strain ATCC 27774 / DSM 6949 / MB).